The sequence spans 287 residues: Protease HtpX (287 aa).

The next 2 membrane-spanning stretches (helical) occupy residues valine 4–isoleucine 24 and valine 37–isoleucine 57. Histidine 143 provides a ligand contact to Zn(2+). The active site involves glutamate 144. Position 147 (histidine 147) interacts with Zn(2+). The next 2 membrane-spanning stretches (helical) occupy residues leucine 158–isoleucine 178 and glycine 194–phenylalanine 214. Zn(2+) is bound at residue glutamate 219.

This sequence belongs to the peptidase M48B family. Zn(2+) serves as cofactor.

Its subcellular location is the cell inner membrane. The chain is Protease HtpX from Idiomarina loihiensis (strain ATCC BAA-735 / DSM 15497 / L2-TR).